Here is a 394-residue protein sequence, read N- to C-terminus: Actin-related protein 2 (394 aa).

An N-acetylmethionine modification is found at Met-1. ATP-binding positions include 160–162 (GDG) and 214–218 (RMIKE). Lys-299 bears the N6-acetyllysine mark. 305-310 (GGSTMY) serves as a coordination point for ATP. Lys-322 is modified (N6-acetyllysine).

This sequence belongs to the actin family. ARP2 subfamily. As to quaternary structure, component of the Arp2/3 complex composed of ACTR2/ARP2, ACTR3/ARP3, ARPC1B/p41-ARC, ARPC2/p34-ARC, ARPC3/p21-ARC, ARPC4/p20-ARC and ARPC5/p16-ARC.

Its subcellular location is the cytoplasm. It is found in the cytoskeleton. The protein localises to the cell projection. The protein resides in the nucleus. Its function is as follows. ATP-binding component of the Arp2/3 complex, a multiprotein complex that mediates actin polymerization upon stimulation by nucleation-promoting factor (NPF). The Arp2/3 complex mediates the formation of branched actin networks in the cytoplasm, providing the force for cell motility. Seems to contact the pointed end of the daughter actin filament. In addition to its role in the cytoplasmic cytoskeleton, the Arp2/3 complex also promotes actin polymerization in the nucleus, thereby regulating gene transcription and repair of damaged DNA. The Arp2/3 complex promotes homologous recombination (HR) repair in response to DNA damage by promoting nuclear actin polymerization, leading to drive motility of double-strand breaks (DSBs). The chain is Actin-related protein 2 (Actr2) from Rattus norvegicus (Rat).